A 475-amino-acid chain; its full sequence is Cytosolic non-specific dipeptidase (475 aa).

Ala2 carries the N-acetylalanine modification. N6-acetyllysine is present on Lys9. Ser58 is modified (phosphoserine). His99 contacts Mn(2+). The active site involves Asp101. Asp132 serves as a coordination point for Mn(2+). The active-site Proton acceptor is Glu166. Substrate-binding positions include 166 to 167, Asp195, and His228; that span reads EE. 2 residues coordinate Mn(2+): Glu167 and Asp195. Ser299 is subject to Phosphoserine. Substrate contacts are provided by Thr330, Arg343, Ser417, and His445. His445 is a binding site for Mn(2+).

The protein belongs to the peptidase M20A family. Homodimer. Mn(2+) serves as cofactor. In terms of tissue distribution, ubiquitously expressed with higher levels in kidney and liver (at protein level). Expressed in peripheral blood leukocytes. Expressed in gastric mucosa and down-regulated in gastric cancer mucosal tissues (at protein level). Broadly expressed in fetal tissues. Expressed in adult liver and placenta.

The protein localises to the cytoplasm. The catalysed reaction is Hydrolysis of dipeptides, preferentially hydrophobic dipeptides including prolyl amino acids.. It catalyses the reaction L-threonyl-L-threonine + H2O = 2 L-threonine. The enzyme catalyses L-threonyl-L-serine + H2O = L-threonine + L-serine. It carries out the reaction L-seryl-L-threonine + H2O = L-threonine + L-serine. The catalysed reaction is L-cysteinylglycine + H2O = L-cysteine + glycine. It catalyses the reaction L-alanyl-L-cysteine + H2O = L-cysteine + L-alanine. The enzyme catalyses (S)-lactate + L-phenylalanine = N-[(S)-lactoyl]-L-phenylalanine + H2O. Inhibited by p-hydroxymercurybenzoate. The inhibitory concentration 50% (IC(50)) is 13 uM. Inhibited by bestatin. The inhibitory concentration 50% (IC(50)) is 7 nM at pH 9.5. Functionally, catalyzes the peptide bond hydrolysis in dipeptides, displaying a non-redundant activity toward threonyl dipeptides. Mediates threonyl dipeptide catabolism in a tissue-specific way. Has high dipeptidase activity toward cysteinylglycine, an intermediate metabolite in glutathione metabolism. Metabolizes N-lactoyl-amino acids, both through hydrolysis to form lactic acid and amino acids, as well as through their formation by reverse proteolysis. Plays a role in the regulation of cell cycle arrest and apoptosis. This chain is Cytosolic non-specific dipeptidase, found in Homo sapiens (Human).